The primary structure comprises 453 residues: Flavonol-3-O-rhamnosyltransferase (453 aa).

His24 functions as the Proton acceptor in the catalytic mechanism. His24 provides a ligand contact to an anthocyanidin. Residue Asp119 is the Charge relay of the active site. His150 provides a ligand contact to an anthocyanidin. The UDP-beta-L-rhamnose site is built by Thr280, Ala333, His350, Asn354, Ser355, and Glu358. An an anthocyanidin-binding site is contributed by Ala373.

Belongs to the UDP-glycosyltransferase family. Expressed in leaves, flowers, siliques, and stems. Expressed in the shoot apex.

The enzyme catalyses kaempferol + UDP-beta-L-rhamnose = kaempferol 3-O-alpha-L-rhamnoside + UDP + H(+). It catalyses the reaction UDP-beta-L-rhamnose + quercetin = quercitrin + UDP + H(+). It participates in flavonoid metabolism. In terms of biological role, flavonol 3-O-rhamnosyltransferase that catalyzes the transfer of rhamnose from UDP-rhamnose to the 3-OH position of kaempferol and quercetin. Possesses low quercetin 3-O-glucosyltransferase activity in vitro. This Arabidopsis thaliana (Mouse-ear cress) protein is Flavonol-3-O-rhamnosyltransferase.